Here is a 70-residue protein sequence, read N- to C-terminus: Cold shock-like protein (70 aa).

One can recognise a CSD domain in the interval 5–65 (GTVKWFSKDK…DTKGPRAKNV (61 aa)).

The protein localises to the cytoplasm. The sequence is that of Cold shock-like protein (csp) from Aquifex aeolicus (strain VF5).